The chain runs to 384 residues: Tryptophan--tRNA ligase (384 aa).

The 'HIGH' region signature appears at 81–89; the sequence is PSGPMHIGH. A 'KMSKS' region motif is present at residues 252–256; the sequence is KMSAS.

This sequence belongs to the class-I aminoacyl-tRNA synthetase family.

It is found in the cytoplasm. It catalyses the reaction tRNA(Trp) + L-tryptophan + ATP = L-tryptophyl-tRNA(Trp) + AMP + diphosphate + H(+). In Thermococcus onnurineus (strain NA1), this protein is Tryptophan--tRNA ligase.